Consider the following 132-residue polypeptide: Pro-MCH 1 (132 aa).

Positions methionine 1–alanine 24 are cleaved as a signal peptide. The cysteines at positions 120 and 129 are disulfide-linked.

It belongs to the MCH family. Pituitary gland. Produced in neurons of lateral basal hypothalamus which project both to the brain and to the neural lobe of the pituitary gland from where MCH is released.

Functionally, plays a role in skin pigmentation by antagonizing the action of melanotropin alpha. Induces melanin concentration within the melanophores. May participate in the control of the hypothalamo-pituitary adrenal gland axis by inhibiting the release of ACTH. In Oncorhynchus kisutch (Coho salmon), this protein is Pro-MCH 1 (mch1).